Here is a 404-residue protein sequence, read N- to C-terminus: CD209 antigen (404 aa).

The Cytoplasmic portion of the chain corresponds to 1–37 (MSDSKEPRLQQLGLLEEEQLRGLGFRQTRGYKSLAGC). 3 consecutive short sequence motifs (endocytosis signal) follow at residues 14–15 (LL), 16–18 (EEE), and 31–34 (YKSL). The helical; Signal-anchor for type II membrane protein transmembrane segment at 38 to 58 (LGHGPLVLQLLSFTLLAGLLV) threads the bilayer. Residues 59 to 404 (QVSKVPSSIS…APATPNPPPA (346 aa)) are Extracellular-facing. Asn-80 carries an N-linked (GlcNAc...) asparagine glycan. 7 consecutive repeat copies span residues 96–118 (KLQE…PEKS), 119–141 (KLQE…PEKS), 142–164 (KLQE…PEKS), 165–187 (KMQE…PEKS), 188–210 (KQQE…PEKS), 211–233 (KQQE…PEKS), and 234–257 (KQQE…HPCP). Residues 96-257 (KLQEIYQELT…AVERLCHPCP (162 aa)) are 7 X approximate tandem repeats. Cystine bridges form between Cys-256-Cys-267, Cys-284-Cys-377, and Cys-356-Cys-369. Positions 263 to 378 (FQGNCYFMSN…CNLAKFWICK (116 aa)) constitute a C-type lectin domain. Residues Glu-347, Asn-349, Val-351, Glu-354, Asn-365, and Asp-366 each contribute to the Ca(2+) site.

As to quaternary structure, homotetramer. Interacts with C1QBP; the interaction is indicative for a C1q:C1QBP:CD209 signaling complex. Interacts with ICAM2 and ICAM3 by binding to mannose-like carbohydrates. Interacts (via C-type lectin domain) with CEACAM1 (via Lewis X moieties); this interaction is regulated by the glycosylation pattern of CEACAM1 on cell types and regulates contact between dendritic cells and neutrophils. In terms of assembly, (Microbial infection) Interacts with HIV-1 and HIV-2 gp120. (Microbial infection) Interacts with ebolavirus envelope glycoproteins. As to quaternary structure, (Microbial infection) Interacts with cytomegalovirus gB protein. In terms of assembly, (Microbial infection) Interacts with HCV E2 protein. (Microbial infection) Interacts with dengue virus major envelope protein E. As to quaternary structure, (Microbial infection) Interacts with measles hemagglutinin. In terms of assembly, (Microbial infection) Interacts with herpes simplex virus 1 surface proteins. (Microbial infection) Interacts with Influenzavirus A hemagglutinin. As to quaternary structure, (Microbial infection) Interacts with SARS-CoV spike glycoprotein. In terms of assembly, (Microbial infection) Interacts with Japanese encephalitis virus E protein. (Microbial infection) Interacts with Lassa virus Glycoprotein. As to quaternary structure, (Microbial infection) Interacts with marburg virus glycoprotein. In terms of assembly, (Microbial infection) Interacts with Respiratory syncytial virus glycoprotein G. (Microbial infection) Interacts with Rift valley fever virus and uukuniemi virus envelope glycoprotein. As to quaternary structure, (Microbial infection) Interacts with west-nile virus envelope glycoprotein. In terms of assembly, (Microbial infection) Interacts with whole M.bovis cells in a Ca(2+)-dependent and independent manner; in vitro experiments suggest it interacts with CH60.1 (groL1), DnaK, GADPH (gap) and LrpG. Predominantly expressed in dendritic cells and in DC-residing tissues. Also found in placental macrophages, endothelial cells of placental vascular channels, peripheral blood mononuclear cells, and THP-1 monocytes.

It is found in the cell membrane. The protein localises to the secreted. Pathogen-recognition receptor expressed on the surface of immature dendritic cells (DCs) and involved in initiation of primary immune response. Thought to mediate the endocytosis of pathogens which are subsequently degraded in lysosomal compartments. The receptor returns to the cell membrane surface and the pathogen-derived antigens are presented to resting T-cells via MHC class II proteins to initiate the adaptive immune response. Functionally, on DCs it is a high affinity receptor for ICAM2 and ICAM3 by binding to mannose-like carbohydrates. May act as a DC rolling receptor that mediates transendothelial migration of DC presursors from blood to tissues by binding endothelial ICAM2. Seems to regulate DC-induced T-cell proliferation by binding to ICAM3 on T-cells in the immunological synapse formed between DC and T-cells. Its function is as follows. (Microbial infection) Acts as an attachment receptor for HIV-1 and HIV-2. In terms of biological role, (Microbial infection) Acts as an attachment receptor for Ebolavirus. (Microbial infection) Acts as an attachment receptor for Cytomegalovirus. Functionally, (Microbial infection) Acts as an attachment receptor for HCV. Its function is as follows. (Microbial infection) Acts as an attachment receptor for Dengue virus. In terms of biological role, (Microbial infection) Acts as an attachment receptor for Measles virus. (Microbial infection) Acts as an attachment receptor for Herpes simplex virus 1. Functionally, (Microbial infection) Acts as an attachment receptor for Influenzavirus A. Its function is as follows. (Microbial infection) Acts as an attachment receptor for SARS-CoV. In terms of biological role, (Microbial infection) Acts as an attachment receptor for Japanese encephalitis virus. (Microbial infection) Acts as an attachment receptor for Lassa virus. Acts as an attachment receptor for Marburg virusn. Functionally, (Microbial infection) Acts as an attachment receptor for Respiratory syncytial virus. Its function is as follows. (Microbial infection) Acts as an attachment receptor for Rift valley fever virus and uukuniemi virus. In terms of biological role, (Microbial infection) Acts as an attachment receptor for West-nile virus. (Microbial infection) Probably recognizes in a calcium-dependent manner high mannose N-linked oligosaccharides in a variety of bacterial pathogen antigens, including Leishmania pifanoi LPG, Lewis-x antigen in Helicobacter pylori LPS, mannose in Klebsiella pneumonae LPS, di-mannose and tri-mannose in Mycobacterium tuberculosis ManLAM and Lewis-x antigen in Schistosoma mansoni SEA. Recognition of M.tuberculosis by dendritic cells occurs partially via this molecule. The chain is CD209 antigen (CD209) from Homo sapiens (Human).